The primary structure comprises 417 residues: Tumor necrosis factor receptor superfamily member 25 (417 aa).

The N-terminal stretch at 1–24 (MEQRPRGCAAVAAALLLVLLGARA) is a signal peptide. Residues 25 to 199 (QGGTRSPRCD…RCAAVCGWRQ (175 aa)) lie on the Extracellular side of the membrane. TNFR-Cys repeat units follow at residues 34–71 (DCAGDFHKKIGLFCCRGCPAGHYLKAPCTEPCGNSTCL), 72–115 (VCPQ…DTRC), 116–163 (GCKP…TDCG), and 164–192 (TCLPGFYEHGDGCVSCPTSTLGSCPERCA). 12 cysteine pairs are disulfide-bonded: Cys35/Cys47, Cys48/Cys61, Cys51/Cys70, Cys73/Cys89, Cys92/Cys107, Cys95/Cys115, Cys117/Cys130, Cys138/Cys155, Cys141/Cys162, Cys165/Cys176, Cys179/Cys191, and Cys187/Cys195. Asn67 is a glycosylation site (N-linked (GlcNAc...) asparagine). Asn106 carries N-linked (GlcNAc...) asparagine glycosylation. A helical transmembrane segment spans residues 200–220 (MFWVQVLLAGLVVPLLLGATL). The Cytoplasmic segment spans residues 221 to 417 (TYTYRHCWPH…DLRSRLQRGP (197 aa)). Residues 332-413 (GPQLYDVMDA…GCVEDLRSRL (82 aa)) enclose the Death domain. (Microbial infection) N-beta-linked (GlcNAc) arginine glycosylation occurs at Arg352.

As to quaternary structure, homodimer. Interacts strongly via the death domains with TNFRSF1 and TRADD to activate at least two distinct signaling cascades, apoptosis and NF-kappa-B signaling. Interacts with BAG4. (Microbial infection) Glycosylated at Arg-352 by enteropathogenic E.coli protein NleB1. In terms of processing, glycosylated. In terms of tissue distribution, abundantly expressed in thymocytes and lymphocytes. Detected in lymphocyte-rich tissues such as thymus, colon, intestine, and spleen. Also found in the prostate.

The protein localises to the cell membrane. It localises to the secreted. Receptor for TNFSF12/APO3L/TWEAK. Interacts directly with the adapter TRADD. Mediates activation of NF-kappa-B and induces apoptosis. May play a role in regulating lymphocyte homeostasis. The protein is Tumor necrosis factor receptor superfamily member 25 (TNFRSF25) of Homo sapiens (Human).